Consider the following 283-residue polypeptide: 4-diphosphocytidyl-2-C-methyl-D-erythritol kinase (283 aa).

The active site involves Lys10. 95–105 (PVAAGLGGGSS) is an ATP binding site. Asp137 is an active-site residue.

The protein belongs to the GHMP kinase family. IspE subfamily.

It carries out the reaction 4-CDP-2-C-methyl-D-erythritol + ATP = 4-CDP-2-C-methyl-D-erythritol 2-phosphate + ADP + H(+). It functions in the pathway isoprenoid biosynthesis; isopentenyl diphosphate biosynthesis via DXP pathway; isopentenyl diphosphate from 1-deoxy-D-xylulose 5-phosphate: step 3/6. Catalyzes the phosphorylation of the position 2 hydroxy group of 4-diphosphocytidyl-2C-methyl-D-erythritol. The polypeptide is 4-diphosphocytidyl-2-C-methyl-D-erythritol kinase (Limosilactobacillus reuteri (strain DSM 20016) (Lactobacillus reuteri)).